A 102-amino-acid chain; its full sequence is Cytochrome b (102 aa).

The next 3 helical transmembrane spans lie at 1–21 (FGSL…FLAM), 45–66 (WLMR…FLHI), and 81–101 (WNIG…GYVL). Heme b-binding residues include His51 and His65.

It belongs to the cytochrome b family. The cytochrome bc1 complex contains 3 respiratory subunits (MT-CYB, CYC1 and UQCRFS1), 2 core proteins (UQCRC1 and UQCRC2) and probably 6 low-molecular weight proteins. Heme b serves as cofactor.

It is found in the mitochondrion inner membrane. Functionally, component of the ubiquinol-cytochrome c reductase complex (complex III or cytochrome b-c1 complex) that is part of the mitochondrial respiratory chain. The b-c1 complex mediates electron transfer from ubiquinol to cytochrome c. Contributes to the generation of a proton gradient across the mitochondrial membrane that is then used for ATP synthesis. The sequence is that of Cytochrome b (mt-cyb) from Ambystoma tigrinum (Eastern tiger salamander).